The chain runs to 200 residues: Small ribosomal subunit protein uS4 (200 aa).

The segment at 22–42 (TGKELEKRPYAPGPHGPNQRK) is disordered. The S4 RNA-binding domain occupies 92 to 152 (ARLDNLVYRM…EKSNSLVVVK (61 aa)).

It belongs to the universal ribosomal protein uS4 family. As to quaternary structure, part of the 30S ribosomal subunit. Contacts protein S5. The interaction surface between S4 and S5 is involved in control of translational fidelity.

One of the primary rRNA binding proteins, it binds directly to 16S rRNA where it nucleates assembly of the body of the 30S subunit. In terms of biological role, with S5 and S12 plays an important role in translational accuracy. This is Small ribosomal subunit protein uS4 from Bacillus cereus (strain B4264).